Here is a 299-residue protein sequence, read N- to C-terminus: ATP phosphoribosyltransferase (299 aa).

It belongs to the ATP phosphoribosyltransferase family. Long subfamily. In terms of assembly, equilibrium between an active dimeric form, an inactive hexameric form and higher aggregates. Interconversion between the various forms is largely reversible and is influenced by the natural substrates and inhibitors of the enzyme. The cofactor is Mg(2+).

The protein localises to the cytoplasm. The enzyme catalyses 1-(5-phospho-beta-D-ribosyl)-ATP + diphosphate = 5-phospho-alpha-D-ribose 1-diphosphate + ATP. Its pathway is amino-acid biosynthesis; L-histidine biosynthesis; L-histidine from 5-phospho-alpha-D-ribose 1-diphosphate: step 1/9. Feedback inhibited by histidine. Its function is as follows. Catalyzes the condensation of ATP and 5-phosphoribose 1-diphosphate to form N'-(5'-phosphoribosyl)-ATP (PR-ATP). Has a crucial role in the pathway because the rate of histidine biosynthesis seems to be controlled primarily by regulation of HisG enzymatic activity. The protein is ATP phosphoribosyltransferase of Pectobacterium carotovorum subsp. carotovorum (strain PC1).